The sequence spans 201 residues: Ciliary microtubule inner protein 2C (201 aa).

This sequence belongs to the CIMIP2 family. Microtubule inner protein component of sperm flagellar doublet microtubules. In terms of tissue distribution, expressed in airway epithelial cells.

It localises to the cytoplasm. Its subcellular location is the cytoskeleton. The protein localises to the cilium axoneme. The protein resides in the flagellum axoneme. In terms of biological role, microtubule inner protein (MIP) part of the dynein-decorated doublet microtubules (DMTs) in cilia axoneme, which is required for motile cilia beating. Binds to the intra-tubulin interfaces. The sequence is that of Ciliary microtubule inner protein 2C from Homo sapiens (Human).